Here is a 139-residue protein sequence, read N- to C-terminus: Putative nickel-responsive regulator (139 aa).

Residues H79, H90, H92, and C98 each coordinate Ni(2+).

This sequence belongs to the transcriptional regulatory CopG/NikR family. It depends on Ni(2+) as a cofactor.

Its function is as follows. Transcriptional regulator. This chain is Putative nickel-responsive regulator, found in Geobacter sulfurreducens (strain ATCC 51573 / DSM 12127 / PCA).